A 157-amino-acid polypeptide reads, in one-letter code: Ribonuclease H (157 aa).

One can recognise an RNase H type-1 domain in the interval 3–144 (ELKQLYIFTD…CDVLARKAAE (142 aa)). 4 residues coordinate Mg(2+): D12, E50, D72, and D136.

It belongs to the RNase H family. In terms of assembly, monomer. The cofactor is Mg(2+).

It localises to the cytoplasm. It carries out the reaction Endonucleolytic cleavage to 5'-phosphomonoester.. In terms of biological role, endonuclease that specifically degrades the RNA of RNA-DNA hybrids. This is Ribonuclease H from Shewanella frigidimarina (strain NCIMB 400).